The chain runs to 501 residues: MCEMSEEYRESAPKGPPPPRLGTGDQKCVKCKEGLPVVVIRAGDAFCRDCFKALYVHKFRAMLGKSRLIFPGEKVLLAWSGGPSSSSMVWQVLEGLSRDSAKRLRFVPGVVYIDEGAACGQSPEDRARTLAEVKLALQTTGFPWHAVALEEVFSLPPSALRCSAQEAAGTEGAYKAAVDSFLQQQHALGTNGVERQSQHCAQDPQSPTGPPTTAQTQALSRLFDSVKTLTAKEELLQTLRTHLILHVARNHGYSKVMTGDSCTRLAIKLMTSLALGRGAFLAWDTGFSDERHGDVVVVRPMREHTLKEVAFYNRLFAVPSICTPALDTKAPEKASIHRLMEAFILRLQAQFPSTVSTVYRTSEKLVKAPRAGCAAGPRCLLCMCTLDVDTADSATAFGAQTSHLPQMQTPVTQARAAAGPCCCAGMGGAPGCCKREDPRAQVMEQLCYGCRVNMKDLPSLELLPPYILSEAQLRSQRATAEQEIREYLLGDSEDEAGTGES.

Positions M1 to A12 are enriched in basic and acidic residues. Disordered stretches follow at residues M1–T23 and G192–A214. C2 is subject to N-acetylcysteine. Phosphoserine is present on S492.

It belongs to the CTU2/NCS2 family. In terms of assembly, component of a complex at least composed of URM1, CTU2/NCS2 and CTU1/ATPBD3.

It is found in the cytoplasm. It functions in the pathway tRNA modification; 5-methoxycarbonylmethyl-2-thiouridine-tRNA biosynthesis. Plays a central role in 2-thiolation of mcm(5)S(2)U at tRNA wobble positions of tRNA(Lys), tRNA(Glu) and tRNA(Gln). May act by forming a heterodimer with CTU1/ATPBD3 that ligates sulfur from thiocarboxylated URM1 onto the uridine of tRNAs at wobble position. This chain is Cytoplasmic tRNA 2-thiolation protein 2, found in Bos taurus (Bovine).